The following is a 211-amino-acid chain: Metalloproteinase inhibitor 3 (211 aa).

The signal sequence occupies residues 1 to 23 (MTPWLGLVVLLSCWSLGHWGAEA). Residue Cys24 participates in Zn(2+) binding. Involved in metalloproteinase-binding stretches follow at residues 24 to 27 (CTCS) and 88 to 89 (ES). Cystine bridges form between Cys24–Cys91, Cys26–Cys118, Cys36–Cys143, Cys145–Cys192, Cys150–Cys155, and Cys163–Cys184. The region spanning 24 to 143 (CTCSPSHPQD…GLNYRYHLGC (120 aa)) is the NTR domain. The tract at residues 105–188 (TGRVYEGKMY…SKHYACIRQK (84 aa)) is mediates interaction with EFEMP1.

It belongs to the protease inhibitor I35 (TIMP) family. In terms of assembly, interacts with EFEMP1. Interacts with KDR. Highest levels are found in kidney, lung and brain followed by ovary and uterus. Low levels are found in bone.

Its subcellular location is the secreted. It localises to the extracellular space. The protein resides in the extracellular matrix. Mediates a variety of processes including matrix regulation and turnover, inflammation, and angiogenesis, through reversible inhibition of zinc protease superfamily enzymes, primarily matrix metalloproteinases (MMPs). Regulates extracellular matrix (ECM) remodeling through inhibition of matrix metalloproteinases (MMP) including MMP-1, MMP-2, MMP-3, MMP-7, MMP-9, MMP-13, MMP-14 and MMP-15. Additionally, modulates the processing of amyloid precursor protein (APP) and apolipoprotein E receptor ApoER2 by inhibiting two alpha-secretases ADAM10 and ADAM17. Functions as a tumor suppressor and a potent inhibitor of angiogenesis. Exerts its anti-angiogenic effect by directly interacting with vascular endothelial growth factor (VEGF) receptor-2/KDR, preventing its binding to the VEGFA ligand. Selectively induces apoptosis in angiogenic endothelial cells through a caspase-independent cell death pathway. Mechanistically, inhibits matrix-induced focal adhesion kinase PTK2 tyrosine phosphorylation and association with paxillin/PXN and disrupts the incorporation of ITGB3, PTK2 and PXN into focal adhesion contacts on the matrix. The chain is Metalloproteinase inhibitor 3 (Timp3) from Mus musculus (Mouse).